We begin with the raw amino-acid sequence, 255 residues long: Syntaxin-6 (255 aa).

Ser-2 is subject to N-acetylserine. Ser-2 bears the Phosphoserine mark. Positions 2-168 are required for interaction with VPS51; the sequence is SMEDPFFVVK…QAQQQLIVEQ (167 aa). Over 2–234 the chain is Cytoplasmic; that stretch reads SMEDPFFVVK…VSHMTSDRRQ (233 aa). Positions 41–74 form a coiled coil; that stretch reads EEIDWTTNELRNNLRSIEWDLEDLDETISIVEAN. Phosphoserine occurs at positions 129 and 152. A t-SNARE coiled-coil homology domain is found at 163–225; the sequence is QLIVEQQDEQ…DNVMKKLAKV (63 aa). A helical; Anchor for type IV membrane protein membrane pass occupies residues 235 to 255; it reads WCAIAILFAVLLVVLILFLVL.

The protein belongs to the syntaxin family. Identified in a complex containing STX6, STX12, VAMP4 and VTI1A. Binds EEA1. Interacts with VPS45A. Interacts with MARCHF2; the interaction promotes MARCHF2-mediated ubiquitination and degradation of CFTR. Interacts with MARCHF3. Interacts with GOPC. Interacts with BLTP3B (via C-terminal coiled-coil domain). Interacts with BAIAP3; this interaction is increased in the presence of calcium. Interacts with VPS13B.

Its subcellular location is the golgi apparatus membrane. It is found in the golgi apparatus. The protein resides in the trans-Golgi network membrane. It localises to the recycling endosome membrane. Functionally, SNARE promoting movement of transport vesicles to target membranes. Targets endosomes to the trans-Golgi network, and may therefore function in retrograde trafficking. Together with SNARE STX12, promotes movement of vesicles from endosomes to the cell membrane, and may therefore function in the endocytic recycling pathway. The sequence is that of Syntaxin-6 (STX6) from Homo sapiens (Human).